Here is a 252-residue protein sequence, read N- to C-terminus: 2-succinyl-6-hydroxy-2,4-cyclohexadiene-1-carboxylate synthase (252 aa).

Belongs to the AB hydrolase superfamily. MenH family. As to quaternary structure, monomer.

It catalyses the reaction 5-enolpyruvoyl-6-hydroxy-2-succinyl-cyclohex-3-ene-1-carboxylate = (1R,6R)-6-hydroxy-2-succinyl-cyclohexa-2,4-diene-1-carboxylate + pyruvate. The protein operates within quinol/quinone metabolism; 1,4-dihydroxy-2-naphthoate biosynthesis; 1,4-dihydroxy-2-naphthoate from chorismate: step 3/7. It functions in the pathway quinol/quinone metabolism; menaquinone biosynthesis. Functionally, catalyzes a proton abstraction reaction that results in 2,5-elimination of pyruvate from 2-succinyl-5-enolpyruvyl-6-hydroxy-3-cyclohexene-1-carboxylate (SEPHCHC) and the formation of 2-succinyl-6-hydroxy-2,4-cyclohexadiene-1-carboxylate (SHCHC). This Escherichia coli (strain SMS-3-5 / SECEC) protein is 2-succinyl-6-hydroxy-2,4-cyclohexadiene-1-carboxylate synthase.